Here is a 298-residue protein sequence, read N- to C-terminus: HTH-type transcriptional regulator ArgP (298 aa).

The region spanning 4–60 (LDYRWIEALDSVVSKGSFERAAEQLFISQSAVSQRIKQLEKYLAQPVLIREQPPRPT) is the HTH lysR-type domain. A DNA-binding region (H-T-H motif) is located at residues 21–40 (FERAAEQLFISQSAVSQRIK).

This sequence belongs to the LysR transcriptional regulatory family. Homodimer.

Functionally, controls the transcription of genes involved in arginine and lysine metabolism. The chain is HTH-type transcriptional regulator ArgP from Vibrio cholerae serotype O1 (strain ATCC 39315 / El Tor Inaba N16961).